The following is a 263-amino-acid chain: N-acyl homoserine lactonase AttM (263 aa).

Zn(2+)-binding residues include histidine 103, histidine 105, aspartate 107, histidine 108, histidine 180, aspartate 202, and histidine 247.

This sequence belongs to the metallo-beta-lactamase superfamily. Zn(2+) serves as cofactor.

The catalysed reaction is an N-acyl-L-homoserine lactone + H2O = an N-acyl-L-homoserine + H(+). The sequence is that of N-acyl homoserine lactonase AttM from Azorhizobium caulinodans (strain ATCC 43989 / DSM 5975 / JCM 20966 / LMG 6465 / NBRC 14845 / NCIMB 13405 / ORS 571).